The sequence spans 466 residues: Nitric oxide reductase subunit B (466 aa).

A helical transmembrane segment spans residues 19–39 (YFVFALILFVGQILFGLIMGL). H60 contacts heme b. The next 8 membrane-spanning stretches (helical) occupy residues 61-81 (TNLL…YLVP), 95-115 (WILF…YLLV), 142-162 (ISKA…GMTV), 169-189 (AISM…LFSF), 205-225 (VVHL…LAFV), 243-263 (VIIA…YFWI), 270-290 (LWLG…MVLF), and 308-328 (VALW…VWGF). Residues H207, H258, and H259 each contribute to the Fe cation site. H348 and H350 together coordinate heme b. 3 helical membrane-spanning segments follow: residues 349–369 (GHMA…SYAM), 391–411 (FWLM…AGVL), and 434–454 (LAIF…GLVA).

It belongs to the heme-copper respiratory oxidase family. Heterodimer of cytochromes b (large subunit) and c (small subunit).

Its subcellular location is the cell membrane. It catalyses the reaction nitrous oxide + 2 Fe(III)-[cytochrome c] + H2O = 2 nitric oxide + 2 Fe(II)-[cytochrome c] + 2 H(+). It functions in the pathway nitrogen metabolism; nitrate reduction (denitrification); dinitrogen from nitrate: step 3/4. Its function is as follows. Component of the anaerobic respiratory chain that transforms nitrate to dinitrogen (denitrification). NorB is the catalytic subunit of the enzyme complex. Shows proton pump activity across the membrane in denitrifying bacterial cells. The mononitrogen reduction is probably coupled to electron transport phosphorylation. The polypeptide is Nitric oxide reductase subunit B (norB) (Pseudomonas aeruginosa (strain ATCC 15692 / DSM 22644 / CIP 104116 / JCM 14847 / LMG 12228 / 1C / PRS 101 / PAO1)).